The sequence spans 297 residues: Large ribosomal subunit protein uL18 (297 aa).

N-acetylglycine is present on Gly-2. N6-acetyllysine is present on residues Lys-5 and Lys-48. A Phosphoserine modification is found at Ser-185. Lys-220 carries the post-translational modification N6-acetyllysine; alternate. A Glycyl lysine isopeptide (Lys-Gly) (interchain with G-Cter in SUMO1); alternate cross-link involves residue Lys-220. Lys-220 is covalently cross-linked (Glycyl lysine isopeptide (Lys-Gly) (interchain with G-Cter in SUMO2); alternate). A Phosphothreonine modification is found at Thr-232. The disordered stretch occupies residues 253–297 (YEKKPKKEVKKKRWNRPKMSLAQKKDRVAQKKASFLRAQERAAES). The span at 258-268 (KKEVKKKRWNR) shows a compositional bias: basic residues. Ser-272 bears the Phosphoserine mark.

This sequence belongs to the universal ribosomal protein uL18 family. Component of the large ribosomal subunit (LSU). Part of the 5S RNP complex, which is a LSU subcomplex composed of the 5S RNA, RPL5 and RPL11. Component of a hexameric 5S RNP precursor complex, composed of 5S RNA, RRS1, RPF2/BXDC1, RPL5, RPL11 and HEATR3; this complex acts as a precursor for ribosome assembly. Interacts with NVL in an ATP-dependent manner. Interacts with RRP1B. Interacts with IPO5, IPO7 and KPNB1; these interactions may be involved in RPL5 nuclear import for the assembly of ribosomal subunits. Interacts with RRP1B.

The protein resides in the cytoplasm. The protein localises to the nucleus. Its subcellular location is the nucleolus. Component of the ribosome, a large ribonucleoprotein complex responsible for the synthesis of proteins in the cell. The small ribosomal subunit (SSU) binds messenger RNAs (mRNAs) and translates the encoded message by selecting cognate aminoacyl-transfer RNA (tRNA) molecules. The large subunit (LSU) contains the ribosomal catalytic site termed the peptidyl transferase center (PTC), which catalyzes the formation of peptide bonds, thereby polymerizing the amino acids delivered by tRNAs into a polypeptide chain. The nascent polypeptides leave the ribosome through a tunnel in the LSU and interact with protein factors that function in enzymatic processing, targeting, and the membrane insertion of nascent chains at the exit of the ribosomal tunnel. As part of the 5S RNP/5S ribonucleoprotein particle it is an essential component of the LSU, required for its formation and the maturation of rRNAs. It also couples ribosome biogenesis to p53/TP53 activation. As part of the 5S RNP it accumulates in the nucleoplasm and inhibits MDM2, when ribosome biogenesis is perturbed, mediating the stabilization and the activation of TP53. The polypeptide is Large ribosomal subunit protein uL18 (RPL5) (Macaca fascicularis (Crab-eating macaque)).